A 465-amino-acid polypeptide reads, in one-letter code: L-seryl-tRNA(Sec) selenium transferase (465 aa).

Lys-294 carries the N6-(pyridoxal phosphate)lysine modification.

Belongs to the SelA family. The cofactor is pyridoxal 5'-phosphate.

The protein resides in the cytoplasm. The catalysed reaction is L-seryl-tRNA(Sec) + selenophosphate + H(+) = L-selenocysteinyl-tRNA(Sec) + phosphate. Its pathway is aminoacyl-tRNA biosynthesis; selenocysteinyl-tRNA(Sec) biosynthesis; selenocysteinyl-tRNA(Sec) from L-seryl-tRNA(Sec) (bacterial route): step 1/1. Its function is as follows. Converts seryl-tRNA(Sec) to selenocysteinyl-tRNA(Sec) required for selenoprotein biosynthesis. The sequence is that of L-seryl-tRNA(Sec) selenium transferase from Mannheimia succiniciproducens (strain KCTC 0769BP / MBEL55E).